The sequence spans 319 residues: Zinc finger protein C19B12.07c (319 aa).

Residues 146–170 form a C2H2-type zinc finger; sequence FRCLCCHVPCKNKKLLREHMNNKRH.

The protein belongs to the ZNF277 family.

It localises to the nucleus. The polypeptide is Zinc finger protein C19B12.07c (Schizosaccharomyces pombe (strain 972 / ATCC 24843) (Fission yeast)).